The primary structure comprises 504 residues: Maturase K (504 aa).

This sequence belongs to the intron maturase 2 family. MatK subfamily.

It localises to the plastid. Its subcellular location is the chloroplast. In terms of biological role, usually encoded in the trnK tRNA gene intron. Probably assists in splicing its own and other chloroplast group II introns. The protein is Maturase K of Carpinus betulus (European hornbeam).